The sequence spans 493 residues: Dynein regulatory complex subunit 2 (493 aa).

Coiled-coil stretches lie at residues D99–I163 and K253–G280.

Belongs to the DRC2 family. As to quaternary structure, component of the nexin-dynein regulatory complex (N-DRC). Interacts with DRC1.

It localises to the cytoplasm. Its subcellular location is the cytoskeleton. The protein localises to the flagellum basal body. The protein resides in the cell projection. It is found in the cilium. It localises to the flagellum. Its subcellular location is the flagellum axoneme. Functionally, component of the nexin-dynein regulatory complex (N-DRC), a key regulator of ciliary/flagellar motility which maintains the alignment and integrity of the distal axoneme and regulates microtubule sliding in motile axonemes. Plays a critical role in the assembly of N-DRC and also stabilizes the assembly of multiple inner dynein arms and radial spokes. Coassembles with DRC1 to form a central scaffold needed for assembly of the N-DRC and its attachment to the outer doublet microtubules. This is Dynein regulatory complex subunit 2 (Ccdc65) from Mus musculus (Mouse).